Here is a 147-residue protein sequence, read N- to C-terminus: Interleukin-4 (147 aa).

The signal sequence occupies residues 1–24 (MGLSPHLAVTLFCFLICTGNGIHG). C47 and C87 form a disulfide bridge. 3 N-linked (GlcNAc...) asparagine glycosylation sites follow: N61, N90, and N117.

This sequence belongs to the IL-4/IL-13 family.

It localises to the secreted. Its function is as follows. Participates in at least several B-cell activation processes as well as of other cell types. It is a costimulator of DNA-synthesis. It induces the expression of class II MHC molecules on resting B-cells. It enhances both secretion and cell surface expression of IgE and IgG1. It also regulates the expression of the low affinity Fc receptor for IgE (CD23) on both lymphocytes and monocytes. Positively regulates IL31RA expression in macrophages. Stimulates autophagy in dendritic cells by interfering with mTORC1 signaling and through the induction of RUFY4. In Rattus norvegicus (Rat), this protein is Interleukin-4 (Il4).